A 140-amino-acid chain; its full sequence is Ribosome-binding factor A (140 aa).

Positions 1–23 are disordered; the sequence is MLRDRNRSGVRGGAEGPSQRQRR.

This sequence belongs to the RbfA family. As to quaternary structure, monomer. Binds 30S ribosomal subunits, but not 50S ribosomal subunits or 70S ribosomes.

It localises to the cytoplasm. One of several proteins that assist in the late maturation steps of the functional core of the 30S ribosomal subunit. Associates with free 30S ribosomal subunits (but not with 30S subunits that are part of 70S ribosomes or polysomes). Required for efficient processing of 16S rRNA. May interact with the 5'-terminal helix region of 16S rRNA. The polypeptide is Ribosome-binding factor A (Acidiphilium cryptum (strain JF-5)).